A 348-amino-acid polypeptide reads, in one-letter code: MDENKQKALAAALGQIEKQFGKGSIMRLGDNRAMDVETISTGSLSLDIALGAGGLPMGRIVEVYGPESSGKTTLTLELIAAAQREGKTCAFIDAEHALDPVYAKKLGVDIDALLVSQPDTGEQALEICDALARSGAIDVMVVDSVAALTPKAEIEGEMGDSHMGLQARMLSQAMRKLTGNLKQSNCMCIFIKQIRMKIGVMFGNPETTTGGNALKFYASVRLDIRRTGAIKEGDEVVGNETRIKVVKNKIAAPFKEANTQIMYGQGFNREGELVDLGVKHKLVEKAGAWYSYNGDKIGQGKANACNYLREHTEVAQTIDKKLREMLLSPAVAEGPEAGEMPEKKEEEF.

65–72 (GPESSGKT) contacts ATP.

The protein belongs to the RecA family.

Its subcellular location is the cytoplasm. Functionally, can catalyze the hydrolysis of ATP in the presence of single-stranded DNA, the ATP-dependent uptake of single-stranded DNA by duplex DNA, and the ATP-dependent hybridization of homologous single-stranded DNAs. It interacts with LexA causing its activation and leading to its autocatalytic cleavage. This Vibrio natriegens protein is Protein RecA.